A 251-amino-acid chain; its full sequence is Ubiquinone/menaquinone biosynthesis C-methyltransferase UbiE (251 aa).

Residues T74, D95, and 123–124 (NA) contribute to the S-adenosyl-L-methionine site.

The protein belongs to the class I-like SAM-binding methyltransferase superfamily. MenG/UbiE family.

It carries out the reaction a 2-demethylmenaquinol + S-adenosyl-L-methionine = a menaquinol + S-adenosyl-L-homocysteine + H(+). It catalyses the reaction a 2-methoxy-6-(all-trans-polyprenyl)benzene-1,4-diol + S-adenosyl-L-methionine = a 5-methoxy-2-methyl-3-(all-trans-polyprenyl)benzene-1,4-diol + S-adenosyl-L-homocysteine + H(+). It functions in the pathway quinol/quinone metabolism; menaquinone biosynthesis; menaquinol from 1,4-dihydroxy-2-naphthoate: step 2/2. Its pathway is cofactor biosynthesis; ubiquinone biosynthesis. Its function is as follows. Methyltransferase required for the conversion of demethylmenaquinol (DMKH2) to menaquinol (MKH2) and the conversion of 2-polyprenyl-6-methoxy-1,4-benzoquinol (DDMQH2) to 2-polyprenyl-3-methyl-6-methoxy-1,4-benzoquinol (DMQH2). This Shewanella baltica (strain OS223) protein is Ubiquinone/menaquinone biosynthesis C-methyltransferase UbiE.